Consider the following 261-residue polypeptide: Pyridoxine 5'-phosphate synthase (261 aa).

Asn-6 is a 3-amino-2-oxopropyl phosphate binding site. 1-deoxy-D-xylulose 5-phosphate is bound at residue Asp-8–His-9. Residue Arg-17 participates in 3-amino-2-oxopropyl phosphate binding. His-42 acts as the Proton acceptor in catalysis. 1-deoxy-D-xylulose 5-phosphate-binding residues include Arg-44 and His-49. Glu-69 acts as the Proton acceptor in catalysis. Thr-99 provides a ligand contact to 1-deoxy-D-xylulose 5-phosphate. The Proton donor role is filled by His-213. 3-amino-2-oxopropyl phosphate is bound by residues Gly-214 and Gly-235–Gln-236.

It belongs to the PNP synthase family. In terms of assembly, homooctamer; tetramer of dimers.

It is found in the cytoplasm. It catalyses the reaction 3-amino-2-oxopropyl phosphate + 1-deoxy-D-xylulose 5-phosphate = pyridoxine 5'-phosphate + phosphate + 2 H2O + H(+). The protein operates within cofactor biosynthesis; pyridoxine 5'-phosphate biosynthesis; pyridoxine 5'-phosphate from D-erythrose 4-phosphate: step 5/5. Catalyzes the complicated ring closure reaction between the two acyclic compounds 1-deoxy-D-xylulose-5-phosphate (DXP) and 3-amino-2-oxopropyl phosphate (1-amino-acetone-3-phosphate or AAP) to form pyridoxine 5'-phosphate (PNP) and inorganic phosphate. The chain is Pyridoxine 5'-phosphate synthase from Aliarcobacter butzleri (strain RM4018) (Arcobacter butzleri).